The chain runs to 209 residues: Probable L-serine dehydratase, alpha chain (209 aa).

This sequence belongs to the iron-sulfur dependent L-serine dehydratase family. Heterodimer of an alpha chain and a beta chain. [4Fe-4S] cluster is required as a cofactor.

The catalysed reaction is L-serine = pyruvate + NH4(+). The protein operates within carbohydrate biosynthesis; gluconeogenesis. This chain is Probable L-serine dehydratase, alpha chain (sdhA), found in Latilactobacillus sakei (Lactobacillus sakei).